The following is a 341-amino-acid chain: UDP-3-O-acylglucosamine N-acyltransferase (341 aa).

H239 functions as the Proton acceptor in the catalytic mechanism.

This sequence belongs to the transferase hexapeptide repeat family. LpxD subfamily. As to quaternary structure, homotrimer.

It carries out the reaction a UDP-3-O-[(3R)-3-hydroxyacyl]-alpha-D-glucosamine + a (3R)-hydroxyacyl-[ACP] = a UDP-2-N,3-O-bis[(3R)-3-hydroxyacyl]-alpha-D-glucosamine + holo-[ACP] + H(+). It functions in the pathway bacterial outer membrane biogenesis; LPS lipid A biosynthesis. In terms of biological role, catalyzes the N-acylation of UDP-3-O-acylglucosamine using 3-hydroxyacyl-ACP as the acyl donor. Is involved in the biosynthesis of lipid A, a phosphorylated glycolipid that anchors the lipopolysaccharide to the outer membrane of the cell. In Shewanella sp. (strain MR-7), this protein is UDP-3-O-acylglucosamine N-acyltransferase.